A 575-amino-acid polypeptide reads, in one-letter code: UvrABC system protein C (575 aa).

Residues 15–90 (AEPGVYQFEA…IKRHQPRYNV (76 aa)) form the GIY-YIG domain. The 36-residue stretch at 198 to 233 (GVLAEPLRREMETAAASQAFERAASLRDRLEAVETF) folds into the UVR domain.

It belongs to the UvrC family. As to quaternary structure, interacts with UvrB in an incision complex.

It localises to the cytoplasm. The UvrABC repair system catalyzes the recognition and processing of DNA lesions. UvrC both incises the 5' and 3' sides of the lesion. The N-terminal half is responsible for the 3' incision and the C-terminal half is responsible for the 5' incision. This chain is UvrABC system protein C, found in Natronomonas pharaonis (strain ATCC 35678 / DSM 2160 / CIP 103997 / JCM 8858 / NBRC 14720 / NCIMB 2260 / Gabara) (Halobacterium pharaonis).